We begin with the raw amino-acid sequence, 163 residues long: Putative protein CASTOR3P (163 aa).

Belongs to the GATS family.

This Homo sapiens (Human) protein is Putative protein CASTOR3P.